A 681-amino-acid polypeptide reads, in one-letter code: Structure-specific endonuclease subunit SLX4 (681 aa).

2 disordered regions span residues 239-305 (EREK…QEQL) and 505-528 (EVTGEAEDGPSIIQVPSSPGNENL). The segment covering 251–261 (SDSSPEPTQLL) has biased composition (polar residues). Over residues 265 to 281 (IIEEEHEVDEEEEDNEN) the composition is skewed to acidic residues. Polar residues-rich tracts occupy residues 288–305 (QLASSPTQISSDDTQEQL) and 518–528 (QVPSSPGNENL).

This sequence belongs to the SLX4 family. Forms a heterodimer with SLX1. In terms of processing, phosphorylated in response to DNA damage.

The protein localises to the nucleus. Regulatory subunit of the SLX1-SLX4 structure-specific endonuclease that resolves DNA secondary structures generated during DNA repair and recombination. Has endonuclease activity towards branched DNA substrates, introducing single-strand cuts in duplex DNA close to junctions with ss-DNA. This is Structure-specific endonuclease subunit SLX4 from Meyerozyma guilliermondii (strain ATCC 6260 / CBS 566 / DSM 6381 / JCM 1539 / NBRC 10279 / NRRL Y-324) (Yeast).